A 24-amino-acid polypeptide reads, in one-letter code: Glutamate dehydrogenase (24 aa).

Belongs to the Glu/Leu/Phe/Val dehydrogenases family. Homohexamer.

The protein resides in the cytoplasm. The catalysed reaction is L-glutamate + NAD(+) + H2O = 2-oxoglutarate + NH4(+) + NADH + H(+). It catalyses the reaction L-glutamate + NADP(+) + H2O = 2-oxoglutarate + NH4(+) + NADPH + H(+). The chain is Glutamate dehydrogenase (gdhA) from Pyrococcus woesei.